The sequence spans 158 residues: 6,7-dimethyl-8-ribityllumazine synthase (158 aa).

5-amino-6-(D-ribitylamino)uracil-binding positions include Phe24, 62–64, and 86–88; these read CFE and AVI. (2S)-2-hydroxy-3-oxobutyl phosphate is bound at residue 91–92; that stretch reads DT. The active-site Proton donor is the His94. Residue Phe119 coordinates 5-amino-6-(D-ribitylamino)uracil. Arg133 contributes to the (2S)-2-hydroxy-3-oxobutyl phosphate binding site.

Belongs to the DMRL synthase family.

The catalysed reaction is (2S)-2-hydroxy-3-oxobutyl phosphate + 5-amino-6-(D-ribitylamino)uracil = 6,7-dimethyl-8-(1-D-ribityl)lumazine + phosphate + 2 H2O + H(+). It participates in cofactor biosynthesis; riboflavin biosynthesis; riboflavin from 2-hydroxy-3-oxobutyl phosphate and 5-amino-6-(D-ribitylamino)uracil: step 1/2. In terms of biological role, catalyzes the formation of 6,7-dimethyl-8-ribityllumazine by condensation of 5-amino-6-(D-ribitylamino)uracil with 3,4-dihydroxy-2-butanone 4-phosphate. This is the penultimate step in the biosynthesis of riboflavin. This is 6,7-dimethyl-8-ribityllumazine synthase from Picosynechococcus sp. (strain ATCC 27264 / PCC 7002 / PR-6) (Agmenellum quadruplicatum).